The following is a 361-amino-acid chain: Peptide chain release factor 1 (361 aa).

Residue Q233 is modified to N5-methylglutamine. The tract at residues 282–310 (SKKQAERAQNRKSQVGSGDRSERIRTYNF) is disordered.

It belongs to the prokaryotic/mitochondrial release factor family. Post-translationally, methylated by PrmC. Methylation increases the termination efficiency of RF1.

It localises to the cytoplasm. Its function is as follows. Peptide chain release factor 1 directs the termination of translation in response to the peptide chain termination codons UAG and UAA. This chain is Peptide chain release factor 1, found in Treponema denticola (strain ATCC 35405 / DSM 14222 / CIP 103919 / JCM 8153 / KCTC 15104).